A 256-amino-acid polypeptide reads, in one-letter code: Carboxysome shell protein CsoS1D (256 aa).

Residues 1-24 form a disordered region; sequence MEPTSSLNRGDRKKGSSLVTGSEV. 2 BMC circularly permuted domains span residues 55 to 157 and 158 to 256; these read ELRT…RTKP and STSW…ISNY. The Gates the pore motif lies at 120 to 121; that stretch reads ER.

This sequence belongs to the EutL/PduB family. Homotrimer. Forms a dimer of stacked trimers, the same faces interact. A CsoS1-CsoS1D-CsoS2 complex can be isolated following expression in E.coli.

It is found in the carboxysome. Its function is as follows. Part of the carboxysome shell, a polyhedral inclusion where RuBisCO (ribulose bisphosphate carboxylase, cbbL-cbbS) is sequestered. It may control transport of RuBisCO reactants in and out of the carboxysome. There are estimated to be 6 CsoS1D hexamers per carboxysome. This is Carboxysome shell protein CsoS1D from Prochlorococcus marinus subsp. pastoris (strain CCMP1986 / NIES-2087 / MED4).